Reading from the N-terminus, the 581-residue chain is Suppressor of cytokine signaling 7 (581 aa).

Disordered regions lie at residues 1 to 23, 89 to 109, 123 to 272, and 297 to 316; these read MVFR…EPGP, PPPP…DPTE, EAES…RTQS, and QRGL…RRSL. 3 stretches are compositionally biased toward pro residues: residues 89–99, 154–164, and 187–198; these read PPPPQPQPPAA, PPGPELPPVPF, and QPPPPPPPPGPL. Positions 124–494 are mediates interaction with SORBS3; that stretch reads AESLETNSCS…GKFLYFLRSR (371 aa). Residues 208-219 show a composition bias toward basic residues; that stretch reads GSFKIRLSRLFR. A compositionally biased stretch (pro residues) spans 303–313; it reads PHPPTPPPPPR. In terms of domain architecture, SH2 spans 400–509; the sequence is WYWGPMNWED…PTPVQLLYPV (110 aa). The region spanning 504-554 is the SOCS box domain; that stretch reads QLLYPVSRFSNVKSLQHLCRFRIRQLVRIDHIPDLPLPKPLISYIRKFYYY.

Substrate-recognition component of the ECS(SOCS7) complex, composed of SOCS7, CUL5, ELOB, ELOC and RNF7/RBX2. Interacts, via the third proline-rich region, with the second SH3 domain of the adapter protein NCK1. Also interacts with GRB2, INSR, PLCG1, SORBS3/vinexin, and phosphorylated STAT3 and STAT5. Interacts with SEPT6. Interacts with phosphorylated IRS4 and PIK3R1. In terms of tissue distribution, expressed in brain and leukocytes. Also in fetal lung fibroblasts and fetal brain.

The protein resides in the cytoplasm. It localises to the nucleus. The protein localises to the cell membrane. It participates in protein modification; protein ubiquitination. Substrate-recognition component of a cullin-5-RING E3 ubiquitin-protein ligase complex (ECS complex, also named CRL5 complex), which mediates the ubiquitination and subsequent proteasomal degradation of target proteins, such as DAB1 and IRS1. Specifically recognizes and binds phosphorylated proteins via its SH2 domain, promoting their ubiquitination. The ECS(SOCS7) complex acts as a key regulator of reelin signaling by mediating ubiquitination and degradation of phosphorylated DAB1 in the cortical plate of the developing cerebral cortex, thereby regulating neuron positioning during cortex development. Functions in insulin signaling and glucose homeostasis through IRS1 ubiquitination and subsequent proteasomal degradation. Also inhibits prolactin, growth hormone and leptin signaling by preventing STAT3 and STAT5 activation, sequestering them in the cytoplasm and reducing their binding to DNA. This is Suppressor of cytokine signaling 7 from Homo sapiens (Human).